Reading from the N-terminus, the 420-residue chain is Deoxyribodipyrimidine photo-lyase (420 aa).

The 123-residue stretch at 2 to 124 (GPLLVWHRGD…PLHLLPAPHL (123 aa)) folds into the Photolyase/cryptochrome alpha/beta domain. A disordered region spans residues 152–175 (APEALPKGPEEGEIPREDPGLPLP). Over residues 159-170 (GPEEGEIPREDP) the composition is skewed to basic and acidic residues. Y197 serves as a coordination point for FAD. DNA is bound at residue R201. 209–213 (GSRLS) is a binding site for FAD. Interaction with DNA stretches follow at residues 244 to 251 (ELLWRDFS) and 310 to 311 (NR). 341 to 343 (DGD) lines the FAD pocket. Position 373 (Q373) interacts with DNA.

Belongs to the DNA photolyase class-1 family. As to quaternary structure, monomer. It depends on FAD as a cofactor.

The enzyme catalyses cyclobutadipyrimidine (in DNA) = 2 pyrimidine residues (in DNA).. Its function is as follows. Involved in repair of UV radiation-induced DNA damage. Catalyzes the light-dependent monomerization (300-600 nm) of cyclobutyl pyrimidine dimers (in cis-syn configuration), which are formed between adjacent bases on the same DNA strand upon exposure to ultraviolet radiation. This is Deoxyribodipyrimidine photo-lyase (phr) from Thermus thermophilus (strain ATCC BAA-163 / DSM 7039 / HB27).